A 429-amino-acid chain; its full sequence is Histidinol dehydrogenase (429 aa).

Positions 130, 191, and 214 each coordinate NAD(+). Substrate-binding residues include Ser237, Gln259, and His262. Zn(2+) contacts are provided by Gln259 and His262. Active-site proton acceptor residues include Glu327 and His328. Positions 328, 361, 415, and 420 each coordinate substrate. A Zn(2+)-binding site is contributed by Asp361. His420 is a Zn(2+) binding site.

Belongs to the histidinol dehydrogenase family. Zn(2+) is required as a cofactor.

The enzyme catalyses L-histidinol + 2 NAD(+) + H2O = L-histidine + 2 NADH + 3 H(+). It functions in the pathway amino-acid biosynthesis; L-histidine biosynthesis; L-histidine from 5-phospho-alpha-D-ribose 1-diphosphate: step 9/9. Its function is as follows. Catalyzes the sequential NAD-dependent oxidations of L-histidinol to L-histidinaldehyde and then to L-histidine. The protein is Histidinol dehydrogenase of Neisseria meningitidis serogroup B (strain ATCC BAA-335 / MC58).